A 379-amino-acid polypeptide reads, in one-letter code: GPN-loop GTPase QQT2 (379 aa).

N-acetylmethionine is present on methionine 1. 51 to 56 contacts GTP; the sequence is GSGKTS. The Gly-Pro-Asn (GPN)-loop; involved in dimer interface motif lies at 108 to 110; it reads GPN. Residues 211–214 and alanine 267 each bind GTP; that span reads NKTD. Positions 288–322 form a coiled coil; that stretch reads METYKADLDMRKADKERLEEERKKHEMEKLRKDME. Composition is skewed to basic and acidic residues over residues 303 to 322 and 335 to 346; these read ERLE…KDME and LKDRDATEKMML. Positions 303 to 379 are disordered; sequence ERLEEERKKH…EDDETKHYYL (77 aa). A compositionally biased stretch (acidic residues) spans 347–372; it reads EEDDEDFQVEDEEDSDDAIDEDDEDD.

It belongs to the GPN-loop GTPase family. In terms of assembly, heterodimer with QQT1. In terms of tissue distribution, expressed in individual cells of roots, leaves and flowers.

It localises to the cytoplasm. The protein localises to the nucleus. The protein resides in the cytoskeleton. It is found in the spindle. Its subcellular location is the phragmoplast. Functionally, small GTPase that is essential for the correct formation of the tangential divisions in early embryos. Associates with microtubule during mitosis and may function in the positioning of the division plane. May participate in the patterning of the early embryo at the octant-dermatogen transition. The polypeptide is GPN-loop GTPase QQT2 (Arabidopsis thaliana (Mouse-ear cress)).